Reading from the N-terminus, the 1011-residue chain is PE-PGRS family protein PE_PGRS30 (1011 aa).

Residues 1–93 (MSFLLVEPDL…AAAYTGAEAA (93 aa)) form the PE domain. Residues 130-696 (SNAGGNGGPG…GGTGGTGGVL (567 aa)) form a PGRS domain region. The span at 595-696 (GGAGGTGGDH…GGTGGTGGVL (102 aa)) shows a compositional bias: gly residues. Residues 595 to 701 (GGAGGTGGDH…TGGVLFGQSG (107 aa)) form a disordered region. A C-terminal domain region spans residues 697–1011 (FGQSGSSGPP…PTQLAQAIAP (315 aa)).

Belongs to the mycobacterial PE family. PGRS subfamily.

It localises to the secreted. The protein localises to the cell wall. The protein resides in the cell surface. Mediates suppression of pro-inflammatory immune response in macrophages via modulation of host cytokine response. Required for full virulence. Involved in inhibition of phago-lysosome fusion. The sequence is that of PE-PGRS family protein PE_PGRS30 from Mycobacterium tuberculosis (strain ATCC 25618 / H37Rv).